A 293-amino-acid polypeptide reads, in one-letter code: 33 kDa chaperonin (293 aa).

Intrachain disulfides connect C235-C237 and C267-C270.

The protein belongs to the HSP33 family. In terms of processing, under oxidizing conditions two disulfide bonds are formed involving the reactive cysteines. Under reducing conditions zinc is bound to the reactive cysteines and the protein is inactive.

Its subcellular location is the cytoplasm. Its function is as follows. Redox regulated molecular chaperone. Protects both thermally unfolding and oxidatively damaged proteins from irreversible aggregation. Plays an important role in the bacterial defense system toward oxidative stress. The protein is 33 kDa chaperonin of Deinococcus radiodurans (strain ATCC 13939 / DSM 20539 / JCM 16871 / CCUG 27074 / LMG 4051 / NBRC 15346 / NCIMB 9279 / VKM B-1422 / R1).